The following is a 342-amino-acid chain: Heat-inducible transcription repressor HrcA (342 aa).

Belongs to the HrcA family.

In terms of biological role, negative regulator of class I heat shock genes (grpE-dnaK-dnaJ and groELS operons). Prevents heat-shock induction of these operons. The sequence is that of Heat-inducible transcription repressor HrcA from Leptospira interrogans serogroup Icterohaemorrhagiae serovar copenhageni (strain Fiocruz L1-130).